A 397-amino-acid polypeptide reads, in one-letter code: Glia-derived nexin (397 aa).

The first 19 residues, methionine 1 to histidine 19, serve as a signal peptide directing secretion. A glycan (N-linked (GlcNAc...) asparagine) is linked at asparagine 159.

It belongs to the serpin family. Most abundant in seminal vesicles.

Its subcellular location is the secreted. It is found in the extracellular space. Functionally, serine protease inhibitor with activity toward thrombin, trypsin, and urokinase. Promotes neurite extension by inhibiting thrombin. Binds heparin. The protein is Glia-derived nexin (Serpine2) of Mus musculus (Mouse).